Here is a 245-residue protein sequence, read N- to C-terminus: Probable septum site-determining protein MinC (245 aa).

The segment covering 112–132 (ARERPLESAEPVAPKKPEKPP) has biased composition (basic and acidic residues). Residues 112–140 (ARERPLESAEPVAPKKPEKPPEPTVKPTR) are disordered.

The protein belongs to the MinC family. Interacts with MinD and FtsZ.

Its function is as follows. Cell division inhibitor that blocks the formation of polar Z ring septums. Rapidly oscillates between the poles of the cell to destabilize FtsZ filaments that have formed before they mature into polar Z rings. Prevents FtsZ polymerization. This Pseudomonas fluorescens (strain Pf0-1) protein is Probable septum site-determining protein MinC.